The following is a 179-amino-acid chain: ATP synthase subunit delta (179 aa).

Belongs to the ATPase delta chain family. In terms of assembly, F-type ATPases have 2 components, F(1) - the catalytic core - and F(0) - the membrane proton channel. F(1) has five subunits: alpha(3), beta(3), gamma(1), delta(1), epsilon(1). F(0) has three main subunits: a(1), b(2) and c(10-14). The alpha and beta chains form an alternating ring which encloses part of the gamma chain. F(1) is attached to F(0) by a central stalk formed by the gamma and epsilon chains, while a peripheral stalk is formed by the delta and b chains.

The protein localises to the cell membrane. Functionally, f(1)F(0) ATP synthase produces ATP from ADP in the presence of a proton or sodium gradient. F-type ATPases consist of two structural domains, F(1) containing the extramembraneous catalytic core and F(0) containing the membrane proton channel, linked together by a central stalk and a peripheral stalk. During catalysis, ATP synthesis in the catalytic domain of F(1) is coupled via a rotary mechanism of the central stalk subunits to proton translocation. In terms of biological role, this protein is part of the stalk that links CF(0) to CF(1). It either transmits conformational changes from CF(0) to CF(1) or is implicated in proton conduction. The chain is ATP synthase subunit delta from Staphylococcus aureus (strain Mu50 / ATCC 700699).